The chain runs to 302 residues: 4-hydroxy-tetrahydrodipicolinate synthase (302 aa).

Position 56 (threonine 56) interacts with pyruvate. Catalysis depends on tyrosine 145, which acts as the Proton donor/acceptor. The active-site Schiff-base intermediate with substrate is the lysine 173. Position 215 (valine 215) interacts with pyruvate.

Belongs to the DapA family. In terms of assembly, homotetramer; dimer of dimers.

It localises to the cytoplasm. It carries out the reaction L-aspartate 4-semialdehyde + pyruvate = (2S,4S)-4-hydroxy-2,3,4,5-tetrahydrodipicolinate + H2O + H(+). It functions in the pathway amino-acid biosynthesis; L-lysine biosynthesis via DAP pathway; (S)-tetrahydrodipicolinate from L-aspartate: step 3/4. Catalyzes the condensation of (S)-aspartate-beta-semialdehyde [(S)-ASA] and pyruvate to 4-hydroxy-tetrahydrodipicolinate (HTPA). This Prochlorococcus marinus subsp. pastoris (strain CCMP1986 / NIES-2087 / MED4) protein is 4-hydroxy-tetrahydrodipicolinate synthase.